A 363-amino-acid chain; its full sequence is UDP-N-acetylenolpyruvoylglucosamine reductase (363 aa).

Residues 27 to 197 enclose the FAD-binding PCMH-type domain; it reads LGGWATRVVT…LSVDFRLARS (171 aa). Arginine 175 is an active-site residue. The Proton donor role is filled by serine 252. The active site involves glutamate 355.

It belongs to the MurB family. It depends on FAD as a cofactor.

Its subcellular location is the cytoplasm. The enzyme catalyses UDP-N-acetyl-alpha-D-muramate + NADP(+) = UDP-N-acetyl-3-O-(1-carboxyvinyl)-alpha-D-glucosamine + NADPH + H(+). The protein operates within cell wall biogenesis; peptidoglycan biosynthesis. Functionally, cell wall formation. The sequence is that of UDP-N-acetylenolpyruvoylglucosamine reductase from Salinispora arenicola (strain CNS-205).